We begin with the raw amino-acid sequence, 346 residues long: Protein farnesyltransferase/geranylgeranyltransferase type-1 subunit alpha (346 aa).

PFTA repeat units follow at residues arginine 59 to valine 93, aspartate 94 to alanine 128, alanine 130 to glycine 164, tryptophan 165 to leucine 198, and methionine 205 to glutamine 239.

Belongs to the protein prenyltransferase subunit alpha family. As to quaternary structure, heterodimer of an alpha and a beta subunit. The cofactor is Mg(2+).

The enzyme catalyses L-cysteinyl-[protein] + (2E,6E)-farnesyl diphosphate = S-(2E,6E)-farnesyl-L-cysteinyl-[protein] + diphosphate. It carries out the reaction geranylgeranyl diphosphate + L-cysteinyl-[protein] = S-geranylgeranyl-L-cysteinyl-[protein] + diphosphate. Functionally, essential subunit of both the farnesyltransferase and the geranylgeranyltransferase complex. Contributes to the transfer of a farnesyl or geranylgeranyl moiety from farnesyl or geranylgeranyl diphosphate to a cysteine at the fourth position from the C-terminus of several proteins having the C-terminal sequence Cys-aliphatic-aliphatic-X. This chain is Protein farnesyltransferase/geranylgeranyltransferase type-1 subunit alpha (FTA), found in Solanum lycopersicum (Tomato).